Consider the following 952-residue polypeptide: Plasma membrane ATPase 4 (952 aa).

Topologically, residues 1 to 64 are cytoplasmic; the sequence is MAKAISLEEI…EKNESKILKF (64 aa). A helical transmembrane segment spans residues 65–84; that stretch reads LGFMWNPLSWVMEAAAVMAI. At 85 to 96 the chain is on the extracellular side; sequence ALANGDGKPPDW. Residues 97-117 traverse the membrane as a helical segment; it reads QDFIGIICLLVINSTISFIEE. Over 118 to 246 the chain is Cytoplasmic; sequence NNAGNAAAAL…GHFQKVLTAI (129 aa). A helical membrane pass occupies residues 247-267; the sequence is GNFCICSIAIGMLVEIIVMYP. Residues 268–277 lie on the Extracellular side of the membrane; it reads IQHRKYRDGI. A helical transmembrane segment spans residues 278-299; sequence DNLLVLLIGGIPIAMPTVLSVT. Over 300-646 the chain is Cytoplasmic; it reads MAIGSHRLSQ…TSRAIFQRMK (347 aa). D332 (4-aspartylphosphate intermediate) is an active-site residue. Mg(2+) contacts are provided by D591 and D595. Residues 647-668 traverse the membrane as a helical segment; it reads NYTIYAVSITIRIVFGFMFIAL. Over 669-673 the chain is Extracellular; that stretch reads IWKYD. The chain crosses the membrane as a helical span at residues 674–696; sequence FSAFMVLIIAILNDGTIMTISKD. At 697–712 the chain is on the cytoplasmic side; it reads RVKPSPMPDSWKLKEI. The chain crosses the membrane as a helical span at residues 713–733; that stretch reads FATGVVLGGYQALMTVVFFWA. At 734 to 754 the chain is on the extracellular side; that stretch reads MHDTDFFSDKFGVKSLRNSDE. Residues 755–775 form a helical membrane-spanning segment; sequence EMMSALYLQVSIISQALIFVT. The Cytoplasmic segment spans residues 776-787; sequence RSRSWSFLERPG. A helical transmembrane segment spans residues 788 to 808; that stretch reads MLLVIAFMIAQLVATLIAVYA. The Extracellular portion of the chain corresponds to 809-817; it reads NWAFARVKG. The helical transmembrane segment at 818 to 838 threads the bilayer; the sequence is CGWGWAGVIWLYSIIFYLPLD. Residues 839-952 are Cytoplasmic-facing; it reads IMKFAIRYIL…IETIQQHYTV (114 aa).

The protein belongs to the cation transport ATPase (P-type) (TC 3.A.3) family. Type IIIA subfamily. Expressed at high levels in root, stem, leaf and flower.

It is found in the cell membrane. It catalyses the reaction ATP + H2O + H(+)(in) = ADP + phosphate + 2 H(+)(out). Functionally, the plasma membrane ATPase of plants and fungi is a hydrogen ion pump. The proton gradient it generates drives the active transport of nutrients by H(+)-symport. The resulting external acidification and/or internal alkinization may mediate growth responses. This Nicotiana plumbaginifolia (Leadwort-leaved tobacco) protein is Plasma membrane ATPase 4 (PMA4).